The following is a 112-amino-acid chain: U15-hexatoxin-Hi1a (112 aa).

The N-terminal stretch at 1–18 (MNTLIAFAVLLLLSTTLG) is a signal peptide. Residues 19–73 (DTDDKVSHEEIQERKELSGISEELLLQQLEAVEAALMEKERLEEMEEDGNSREKR) constitute a propeptide that is removed on maturation. 3 disulfides stabilise this stretch: Cys-74-Cys-88, Cys-81-Cys-93, and Cys-87-Cys-107.

It belongs to the neurotoxin 14 (magi-1) family. 08 (Ltx-4) subfamily. Expressed by the venom gland.

The protein localises to the secreted. Probable ion channel inhibitor. This is U15-hexatoxin-Hi1a from Hadronyche infensa (Fraser island funnel-web spider).